The chain runs to 185 residues: dCTP deaminase, dUMP-forming (185 aa).

DCTP contacts are provided by residues 99 to 104 (KSSIAR), aspartate 117, 125 to 127 (TLE), glutamine 146, tyrosine 159, lysine 166, and glutamine 170. Residue glutamate 127 is the Proton donor/acceptor of the active site.

It belongs to the dCTP deaminase family. Homotrimer.

It catalyses the reaction dCTP + 2 H2O = dUMP + NH4(+) + diphosphate. It functions in the pathway pyrimidine metabolism; dUMP biosynthesis; dUMP from dCTP: step 1/1. In terms of biological role, bifunctional enzyme that catalyzes both the deamination of dCTP to dUTP and the hydrolysis of dUTP to dUMP without releasing the toxic dUTP intermediate. The protein is dCTP deaminase, dUMP-forming of Methanospirillum hungatei JF-1 (strain ATCC 27890 / DSM 864 / NBRC 100397 / JF-1).